The sequence spans 300 residues: Acetylglutamate kinase (300 aa).

Substrate contacts are provided by residues 72-73 (GG), Arg-94, and Asn-197.

This sequence belongs to the acetylglutamate kinase family. ArgB subfamily.

It is found in the cytoplasm. The enzyme catalyses N-acetyl-L-glutamate + ATP = N-acetyl-L-glutamyl 5-phosphate + ADP. It functions in the pathway amino-acid biosynthesis; L-arginine biosynthesis; N(2)-acetyl-L-ornithine from L-glutamate: step 2/4. In terms of biological role, catalyzes the ATP-dependent phosphorylation of N-acetyl-L-glutamate. The polypeptide is Acetylglutamate kinase (Azoarcus sp. (strain BH72)).